The following is a 395-amino-acid chain: S-adenosylmethionine synthase (395 aa).

His-16 provides a ligand contact to ATP. Asp-18 provides a ligand contact to Mg(2+). K(+) is bound at residue Glu-44. L-methionine contacts are provided by Glu-57 and Gln-100. The interval 100-110 (QSPDIAQGVDR) is flexible loop. Residues 167–169 (DAK), 233–234 (RF), Asp-242, 248–249 (RK), Ala-265, and Lys-269 each bind ATP. L-methionine is bound at residue Asp-242. Position 273 (Lys-273) interacts with L-methionine.

The protein belongs to the AdoMet synthase family. As to quaternary structure, homotetramer; dimer of dimers. Requires Mg(2+) as cofactor. It depends on K(+) as a cofactor.

It localises to the cytoplasm. It carries out the reaction L-methionine + ATP + H2O = S-adenosyl-L-methionine + phosphate + diphosphate. The protein operates within amino-acid biosynthesis; S-adenosyl-L-methionine biosynthesis; S-adenosyl-L-methionine from L-methionine: step 1/1. Functionally, catalyzes the formation of S-adenosylmethionine (AdoMet) from methionine and ATP. The overall synthetic reaction is composed of two sequential steps, AdoMet formation and the subsequent tripolyphosphate hydrolysis which occurs prior to release of AdoMet from the enzyme. This Burkholderia ambifaria (strain MC40-6) protein is S-adenosylmethionine synthase.